The chain runs to 154 residues: SsrA-binding protein (154 aa).

Positions 134 to 154 (KRQAIKERQTQREIQRELKER) are disordered.

It belongs to the SmpB family.

It localises to the cytoplasm. Its function is as follows. Required for rescue of stalled ribosomes mediated by trans-translation. Binds to transfer-messenger RNA (tmRNA), required for stable association of tmRNA with ribosomes. tmRNA and SmpB together mimic tRNA shape, replacing the anticodon stem-loop with SmpB. tmRNA is encoded by the ssrA gene; the 2 termini fold to resemble tRNA(Ala) and it encodes a 'tag peptide', a short internal open reading frame. During trans-translation Ala-aminoacylated tmRNA acts like a tRNA, entering the A-site of stalled ribosomes, displacing the stalled mRNA. The ribosome then switches to translate the ORF on the tmRNA; the nascent peptide is terminated with the 'tag peptide' encoded by the tmRNA and targeted for degradation. The ribosome is freed to recommence translation, which seems to be the essential function of trans-translation. This chain is SsrA-binding protein, found in Synechococcus sp. (strain JA-2-3B'a(2-13)) (Cyanobacteria bacterium Yellowstone B-Prime).